The chain runs to 85 residues: Small ribosomal subunit protein bS16 (85 aa).

This sequence belongs to the bacterial ribosomal protein bS16 family.

This is Small ribosomal subunit protein bS16 from Xanthomonas euvesicatoria pv. vesicatoria (strain 85-10) (Xanthomonas campestris pv. vesicatoria).